We begin with the raw amino-acid sequence, 310 residues long: Probable cobalamin biosynthesis protein CobD (310 aa).

Transmembrane regions (helical) follow at residues 53 to 73 (LVFG…IFFT), 80 to 100 (LISN…FSIG), 157 to 177 (DSII…AFIY), 215 to 235 (IAGI…VPAI), and 289 to 309 (AVDY…FNLI).

The protein belongs to the CobD/CbiB family.

Its subcellular location is the cell membrane. The protein operates within cofactor biosynthesis; adenosylcobalamin biosynthesis. Its function is as follows. Converts cobyric acid to cobinamide by the addition of aminopropanol on the F carboxylic group. This Methanococcus vannielii (strain ATCC 35089 / DSM 1224 / JCM 13029 / OCM 148 / SB) protein is Probable cobalamin biosynthesis protein CobD.